Here is a 400-residue protein sequence, read N- to C-terminus: Argininosuccinate synthase (400 aa).

ATP is bound by residues 10 to 18 (AYSGGVDTS) and alanine 38. L-citrulline is bound at residue tyrosine 89. Glycine 119 contributes to the ATP binding site. Threonine 121, asparagine 125, and aspartate 126 together coordinate L-aspartate. Asparagine 125 provides a ligand contact to L-citrulline. Arginine 129, serine 177, glutamate 262, and tyrosine 274 together coordinate L-citrulline.

Belongs to the argininosuccinate synthase family. Type 1 subfamily. As to quaternary structure, homotetramer.

The protein resides in the cytoplasm. The enzyme catalyses L-citrulline + L-aspartate + ATP = 2-(N(omega)-L-arginino)succinate + AMP + diphosphate + H(+). Its pathway is amino-acid biosynthesis; L-arginine biosynthesis; L-arginine from L-ornithine and carbamoyl phosphate: step 2/3. The chain is Argininosuccinate synthase from Trichodesmium erythraeum (strain IMS101).